The sequence spans 1397 residues: MKDLLDIMRKKTDSDGHAPVEFDRIRIGLASPEMIKSWSHGEVKKPETINYRTFKPERDGLFCAKIFGPVKDYECLCGKYKRMKYKGVICEKCGVEVTTAKVRRERMGHIELASPVAHIWFLKSLPSRIGLLLDMTLRDIERVLYFESYVVTDPGMTPFEKYQLLNDEEYFTALEEHGDEFVAKMGAEAVQDLLKDIDLEAEISRLREEIPQTTSETKLKKASKRLKLMEAFKDSNNKPEWMVMNVLPVLPPDLRPLVPLEGGRFATSDLNDLYRRVINRNNRLKRLLDLAAPDIIVRNEKRMLQESVDALLDNGRRGRAITGSNKRPLKSLADMIKGKQGRFRQNLLGKRVDYSGRSVITVGPTLRLHQCGLPKKMALELFKPFIFAKLQASGQATTIKAAKKMVERETPEVWDVLASVIRQHPVMLNRAPTLHRLGLQAFEPILIEGKAIRLHPLVCAAFNADFDGDQMAVHVPLTLEAQLEARALMMSTNNILSPANGEPIIVPSQDVVLGLYYITRDAVNAKGEGMVFADTHEVNRALATGQVAIHARVKVRVHQTVINENGEREQQTIIVDTTPGRCLLWEVVPEGLSFDMINLEMTKKNISKLINSCYRKLGLKDTVIFADQLMYLGFRQATRSGVSVGMEDMLIPPTKHTIIDKAETEVREIEQQFEQGFVTAGERYNKVVDIWARTNDQVAKAMMDNLSYTLVKNKQGEDEKQKSFNSIYMMSDSGARGSAAQIRQLAGMRGLMAKPDGSIIETPIKANFREGLTVLQYFISTHGARKGLADTALKTANSGYLTRRLVDVAQDLVITEPDCGTRGGLVMTPFIQGGDVIEPLRDRVLGRVTAEDVRRASDDEVVLPRGTLIDEKIAAQLEEAGVDEVKVRSVIACESTFGVCAKCYGRDLARGHLVNPGESVGVMAAQSIGEPGTQLTMRTFHVGGAASRTSAANSVQVRNKGTVRFHNVKTVQHAKGHLVSVSRSGEIGIADELGRERERYKLPYGASILLKDGELVEAGGIVATWDPHTHPLVTEVAGKARFSQIADGVTATSKTDDATGMTTVEILPVTARPASGKDLRPAIVLDTTDGGEQFYFLPQNTIVTVRDGETIGVGDVIGRVPQESSRTRDITGGLPRVADLFEARKPKEHAILAEVSGIVSFGKETKGKNRLVITPDDGSEIYEELIPKWRQINVFEGEHVNRGETISDGPQNPHDILRLKGEVALTNYIVNEVQDVYRLQGVKINDKHIEVIVRQMLRKVDIIDGGDTSFIKGEQVDYIRVVQENQAVLAQNKFPAKFERQLMGITKASLSTDSFISAASFQETTRVLTEAAVTGKEDDLRGLKENVVVGRLIPAGTGLAYHLERRRQEAEAAEHALHNDFSEVDQAFSQALNSEQF.

Zn(2+) contacts are provided by Cys-75, Cys-77, Cys-90, and Cys-93. Residues Asp-465, Asp-467, and Asp-469 each coordinate Mg(2+). Positions 819, 893, 900, and 903 each coordinate Zn(2+).

It belongs to the RNA polymerase beta' chain family. In terms of assembly, the RNAP catalytic core consists of 2 alpha, 1 beta, 1 beta' and 1 omega subunit. When a sigma factor is associated with the core the holoenzyme is formed, which can initiate transcription. Mg(2+) serves as cofactor. Zn(2+) is required as a cofactor.

The catalysed reaction is RNA(n) + a ribonucleoside 5'-triphosphate = RNA(n+1) + diphosphate. DNA-dependent RNA polymerase catalyzes the transcription of DNA into RNA using the four ribonucleoside triphosphates as substrates. The chain is DNA-directed RNA polymerase subunit beta' from Acinetobacter baumannii (strain SDF).